A 65-amino-acid chain; its full sequence is Protein translocase subunit SecE (65 aa).

At 1-27 (MEKLKEFLKGVRDELKRVVWPSRELVV) the chain is on the cytoplasmic side. The chain crosses the membrane as a helical span at residues 28–59 (KATISVIIFSLAIGVYLWILDLTFTKIISFIL). The Periplasmic portion of the chain corresponds to 60–65 (SLRGSL).

Belongs to the SecE/SEC61-gamma family. In terms of assembly, component of the Sec protein translocase complex. Heterotrimer consisting of SecY, SecE and SecG subunits. The heterotrimers can form oligomers, although 1 heterotrimer is thought to be able to translocate proteins. Interacts with SecDF, and other proteins may be involved. The channel interacts with SecA via subunit SecY.

It is found in the cell inner membrane. Its function is as follows. Essential subunit of the protein translocation channel SecYEG. Clamps together the 2 halves of SecY. May contact the channel plug during translocation. The polypeptide is Protein translocase subunit SecE (Aquifex aeolicus (strain VF5)).